The primary structure comprises 279 residues: Prephenate dehydratase (279 aa).

The 177-residue stretch at 2 to 178 folds into the Prephenate dehydratase domain; it reads KIAYLGPRGS…NSTRFWLLGK (177 aa). The ACT domain occupies 194–270; that stretch reads LALTLPDNLP…LGVKVRLLGN (77 aa).

The enzyme catalyses prephenate + H(+) = 3-phenylpyruvate + CO2 + H2O. Its pathway is amino-acid biosynthesis; L-phenylalanine biosynthesis; phenylpyruvate from prephenate: step 1/1. The chain is Prephenate dehydratase (pheA) from Lactococcus lactis subsp. lactis (strain IL1403) (Streptococcus lactis).